A 174-amino-acid chain; its full sequence is Phosphopantetheine adenylyltransferase (174 aa).

Substrate is bound at residue Thr10. ATP contacts are provided by residues 10 to 11 (TF) and His18. The substrate site is built by Lys44, Leu76, and Arg90. ATP is bound by residues 91 to 93 (GLR), Glu101, and 126 to 132 (HAYISSS).

It belongs to the bacterial CoaD family. As to quaternary structure, homohexamer. It depends on Mg(2+) as a cofactor.

The protein resides in the cytoplasm. The enzyme catalyses (R)-4'-phosphopantetheine + ATP + H(+) = 3'-dephospho-CoA + diphosphate. The protein operates within cofactor biosynthesis; coenzyme A biosynthesis; CoA from (R)-pantothenate: step 4/5. Its function is as follows. Reversibly transfers an adenylyl group from ATP to 4'-phosphopantetheine, yielding dephospho-CoA (dPCoA) and pyrophosphate. The protein is Phosphopantetheine adenylyltransferase of Alkalilimnicola ehrlichii (strain ATCC BAA-1101 / DSM 17681 / MLHE-1).